The sequence spans 194 residues: Large ribosomal subunit protein eL15 (194 aa).

The disordered stretch occupies residues 165 to 194; it reads AGKKGRGLMNKGKGAEKVRPGIRANKKLGK.

The protein belongs to the eukaryotic ribosomal protein eL15 family.

This Methanococcus aeolicus (strain ATCC BAA-1280 / DSM 17508 / OCM 812 / Nankai-3) protein is Large ribosomal subunit protein eL15.